A 300-amino-acid polypeptide reads, in one-letter code: Ornithine carbamoyltransferase (300 aa).

Carbamoyl phosphate-binding positions include 49 to 52, Gln76, Arg100, and 127 to 130; these read STRT and HPCQ. L-ornithine contacts are provided by residues Asn158, Asp218, and 222-223; that span reads SM. Carbamoyl phosphate contacts are provided by residues 258 to 259 and Arg286; that span reads CL.

It belongs to the aspartate/ornithine carbamoyltransferase superfamily. OTCase family.

The protein localises to the cytoplasm. It catalyses the reaction carbamoyl phosphate + L-ornithine = L-citrulline + phosphate + H(+). Its pathway is amino-acid biosynthesis; L-arginine biosynthesis; L-arginine from L-ornithine and carbamoyl phosphate: step 1/3. Functionally, reversibly catalyzes the transfer of the carbamoyl group from carbamoyl phosphate (CP) to the N(epsilon) atom of ornithine (ORN) to produce L-citrulline. This is Ornithine carbamoyltransferase from Nitratidesulfovibrio vulgaris (strain ATCC 29579 / DSM 644 / CCUG 34227 / NCIMB 8303 / VKM B-1760 / Hildenborough) (Desulfovibrio vulgaris).